The sequence spans 86 residues: Small ribosomal subunit protein bS16 (86 aa).

Belongs to the bacterial ribosomal protein bS16 family.

In Myxococcus xanthus (strain DK1622), this protein is Small ribosomal subunit protein bS16.